The primary structure comprises 173 residues: RNA polymerase sigma factor YlaC (173 aa).

The protein belongs to the sigma-70 factor family. ECF subfamily.

Sigma factors are initiation factors that promote the attachment of RNA polymerase to specific initiation sites and are then released. This sigma factor contributes to oxidative stress resistance. The chain is RNA polymerase sigma factor YlaC (ylaC) from Bacillus subtilis (strain 168).